Reading from the N-terminus, the 662-residue chain is UvrABC system protein B (662 aa).

The Helicase ATP-binding domain maps to 25–412 (EGIEKGLKMQ…SQKIVEQIIR (388 aa)). Position 38-45 (38-45 (GVTGSGKT)) interacts with ATP. Positions 91–114 (YYDYYQPEAYLPATDTYIEKDSAI) match the Beta-hairpin motif. Residues 429-595 (QVDDLYGEIK…TVQKAVRDVI (167 aa)) form the Helicase C-terminal domain. Residues 622–657 (KQYVEKLTREMKEAAKALEFEKAAMLRDLIIELRAQ) form the UVR domain.

It belongs to the UvrB family. As to quaternary structure, forms a heterotetramer with UvrA during the search for lesions. Interacts with UvrC in an incision complex.

It localises to the cytoplasm. In terms of biological role, the UvrABC repair system catalyzes the recognition and processing of DNA lesions. A damage recognition complex composed of 2 UvrA and 2 UvrB subunits scans DNA for abnormalities. Upon binding of the UvrA(2)B(2) complex to a putative damaged site, the DNA wraps around one UvrB monomer. DNA wrap is dependent on ATP binding by UvrB and probably causes local melting of the DNA helix, facilitating insertion of UvrB beta-hairpin between the DNA strands. Then UvrB probes one DNA strand for the presence of a lesion. If a lesion is found the UvrA subunits dissociate and the UvrB-DNA preincision complex is formed. This complex is subsequently bound by UvrC and the second UvrB is released. If no lesion is found, the DNA wraps around the other UvrB subunit that will check the other stand for damage. The sequence is that of UvrABC system protein B from Carboxydothermus hydrogenoformans (strain ATCC BAA-161 / DSM 6008 / Z-2901).